The chain runs to 321 residues: Beta-ketoacyl-[acyl-carrier-protein] synthase III (321 aa).

Catalysis depends on residues cysteine 114 and histidine 248. Residues 249–253 (QANIR) are ACP-binding. Asparagine 278 is a catalytic residue.

It belongs to the thiolase-like superfamily. FabH family. In terms of assembly, homodimer.

Its subcellular location is the cytoplasm. The catalysed reaction is malonyl-[ACP] + acetyl-CoA + H(+) = 3-oxobutanoyl-[ACP] + CO2 + CoA. It participates in lipid metabolism; fatty acid biosynthesis. In terms of biological role, catalyzes the condensation reaction of fatty acid synthesis by the addition to an acyl acceptor of two carbons from malonyl-ACP. Catalyzes the first condensation reaction which initiates fatty acid synthesis and may therefore play a role in governing the total rate of fatty acid production. Possesses both acetoacetyl-ACP synthase and acetyl transacylase activities. Its substrate specificity determines the biosynthesis of branched-chain and/or straight-chain of fatty acids. This is Beta-ketoacyl-[acyl-carrier-protein] synthase III from Methylococcus capsulatus (strain ATCC 33009 / NCIMB 11132 / Bath).